The chain runs to 71 residues: Beta-defensin 7 (71 aa).

Positions 1 to 22 (MRIHYVLFAFLLVLLSPFAAFS) are cleaved as a signal peptide. Glutamine 23 carries the post-translational modification Pyrrolidone carboxylic acid. A propeptide spanning residues 23-25 (QDI) is cleaved from the precursor. Disulfide bonds link cysteine 31–cysteine 58, cysteine 38–cysteine 52, and cysteine 42–cysteine 59.

This sequence belongs to the beta-defensin family. LAP/TAP subfamily.

It localises to the secreted. In terms of biological role, has bactericidal activity. In Mus musculus (Mouse), this protein is Beta-defensin 7 (Defb7).